The chain runs to 1182 residues: CRISPR-associated endoribonuclease Cas13a (1182 aa).

Residues 132-279 (FNNLIEKVQN…ENNSDNKLKQ (148 aa)) are a coiled coil. The HEPN-like fold 1 stretch occupies residues 366–508 (YIKNTGQLET…NNEEIKGYFI (143 aa)). Residues 896–955 (KVEKENIEDYNKKEEIEQKKKSNIEKLQDLKVELHKKWEQNKITEKEIEKYNNTTRKINE) adopt a coiled-coil conformation. The tract at residues 965–1120 (LQNVYLLHEM…QNHILKSTKT (156 aa)) is HEPN-like fold 2.

The protein belongs to the CRISPR-associated endoribonuclease Cas13a family. It depends on a divalent metal cation as a cofactor.

With respect to regulation, target RNA acts as an activator for non-specific ssRNA degradation. In terms of biological role, CRISPR (clustered regularly interspaced short palindromic repeat), is an adaptive immune system that provides protection against mobile genetic elements (viruses, transposable elements and conjugative plasmids). CRISPR clusters contain sequences complementary to antecedent mobile elements and target invading nucleic acids. Unlike many single-component effectors, this CRISPR-Cas system targets RNA. CRISPR clusters are transcribed from pre-CRISPR RNA (crRNA) and processed into crRNA by this protein. Cleaves linear target ssRNA in a pre-crRNA-dependent fashion, preferentially before U residues. Binding a viable target RNA target activates this protein for non-specific RNA degradation in vitro (called collateral RNA degradation), which is fairly sensitive as it requires picomolar levels of viable target RNA. This Leptotrichia wadei (strain F0279) protein is CRISPR-associated endoribonuclease Cas13a.